Reading from the N-terminus, the 223-residue chain is MEDVKLEFPSLPQCKDDAEEWTYPMRREMQEVLPGLFLGPYSSAMKSKLPILQKHGITHIICIRQNIEANFIKPNFQQLFRYLVLDIADNPVENIIRFFPMTKEFIDGSLQNGGKVLVHGNAGISRSAAFVIAYIMETFGMKYRDAFAYVQERRFCINPNAGFVHQLQEYEAIYLAKLTIQMMSPLQIERSLAVHSGTTGSVKRTHEEDDDFGNMQVATAQNG.

The region spanning 28–176 is the Tyrosine-protein phosphatase domain; that stretch reads EMQEVLPGLF…LQEYEAIYLA (149 aa). The Interaction with FBXW7 signature appears at 76 to 78; sequence FQQ. A phosphoserine mark is found at S184 and S201. The tract at residues 199–223 is disordered; it reads TGSVKRTHEEDDDFGNMQVATAQNG.

The protein belongs to the protein-tyrosine phosphatase family. Non-receptor class subfamily. Interacts with MAPK1; independently of MAPK1 phosphorylation status. Interacts with CARHSP1/Crhsp-24. Interacts (via FQQ motif) with FBXW7 (via F-box domain); the interaction is direct and prevents FBXW7 interaction with SKP1, a component of the SCF(FBXW7) complex. As to expression, widely expressed with highest levels in muscle, testis and brain. In testis, expression starts 13-14 days after birth and is limited to the seminiferous tubule and to round and elongating spermatids. Expression is low in condensing spermatids and pachytene spermatocytes, and absent in spermatogonia, spermatozoa and somatic Sertoli cells.

It localises to the nucleus. Its subcellular location is the cytoplasm. The protein localises to the cytosol. Functionally, catalytically inactive phosphatase. Acts as a nuclear anchor for MAPK1/MAPK3 (ERK1/ERK2). Modulates cell-fate decisions and cell migration by spatiotemporal regulation of MAPK1/MAPK3 (ERK1/ERK2). By binding to the F-box of FBXW7, prevents the assembly of FBXW7 into the SCF E3 ubiquitin-protein ligase complex, and thereby inhibits degradation of its substrates. Plays a role in spermatogenesis. The protein is Serine/threonine/tyrosine-interacting protein of Mus musculus (Mouse).